The chain runs to 71 residues: MANDVIEIEGKVKETLPNAMFQVELENGAVILAHVSGKIRKNFIRILPGDRVTVEMSPYDLTKGRITYRFR.

The region spanning 1–71 is the S1-like domain; that stretch reads MANDVIEIEG…TKGRITYRFR (71 aa).

It belongs to the IF-1 family. In terms of assembly, component of the 30S ribosomal translation pre-initiation complex which assembles on the 30S ribosome in the order IF-2 and IF-3, IF-1 and N-formylmethionyl-tRNA(fMet); mRNA recruitment can occur at any time during PIC assembly.

The protein localises to the cytoplasm. Functionally, one of the essential components for the initiation of protein synthesis. Stabilizes the binding of IF-2 and IF-3 on the 30S subunit to which N-formylmethionyl-tRNA(fMet) subsequently binds. Helps modulate mRNA selection, yielding the 30S pre-initiation complex (PIC). Upon addition of the 50S ribosomal subunit IF-1, IF-2 and IF-3 are released leaving the mature 70S translation initiation complex. This is Translation initiation factor IF-1 from Leuconostoc mesenteroides subsp. mesenteroides (strain ATCC 8293 / DSM 20343 / BCRC 11652 / CCM 1803 / JCM 6124 / NCDO 523 / NBRC 100496 / NCIMB 8023 / NCTC 12954 / NRRL B-1118 / 37Y).